Reading from the N-terminus, the 412-residue chain is Serine hydroxymethyltransferase (412 aa).

(6S)-5,6,7,8-tetrahydrofolate is bound by residues leucine 121 and 125–127 (GHL). Lysine 230 carries the post-translational modification N6-(pyridoxal phosphate)lysine. A (6S)-5,6,7,8-tetrahydrofolate-binding site is contributed by 353–355 (TPF).

It belongs to the SHMT family. As to quaternary structure, homodimer. The cofactor is pyridoxal 5'-phosphate.

The protein localises to the cytoplasm. It carries out the reaction (6R)-5,10-methylene-5,6,7,8-tetrahydrofolate + glycine + H2O = (6S)-5,6,7,8-tetrahydrofolate + L-serine. Its pathway is one-carbon metabolism; tetrahydrofolate interconversion. It functions in the pathway amino-acid biosynthesis; glycine biosynthesis; glycine from L-serine: step 1/1. Its function is as follows. Catalyzes the reversible interconversion of serine and glycine with tetrahydrofolate (THF) serving as the one-carbon carrier. This reaction serves as the major source of one-carbon groups required for the biosynthesis of purines, thymidylate, methionine, and other important biomolecules. Also exhibits THF-independent aldolase activity toward beta-hydroxyamino acids, producing glycine and aldehydes, via a retro-aldol mechanism. The protein is Serine hydroxymethyltransferase of Finegoldia magna (strain ATCC 29328 / DSM 20472 / WAL 2508) (Peptostreptococcus magnus).